Reading from the N-terminus, the 119-residue chain is Large ribosomal subunit protein uL18 (119 aa).

It belongs to the universal ribosomal protein uL18 family. Part of the 50S ribosomal subunit; part of the 5S rRNA/L5/L18/L25 subcomplex. Contacts the 5S and 23S rRNAs.

In terms of biological role, this is one of the proteins that bind and probably mediate the attachment of the 5S RNA into the large ribosomal subunit, where it forms part of the central protuberance. This is Large ribosomal subunit protein uL18 from Anaeromyxobacter sp. (strain Fw109-5).